The primary structure comprises 150 residues: Catabolic 3-dehydroquinase 2 (150 aa).

Tyr-23 serves as the catalytic Proton acceptor. Residues Asn-74, His-80, and Asp-87 each coordinate substrate. Residue His-100 is the Proton donor of the active site. Substrate-binding positions include 101 to 102 (IT) and Arg-111.

Belongs to the type-II 3-dehydroquinase family. As to quaternary structure, homododecamer. Adopts a ring-like structure, composed of an arrangement of two hexameric rings stacked on top of one another.

The catalysed reaction is 3-dehydroquinate = 3-dehydroshikimate + H2O. It functions in the pathway aromatic compound metabolism; 3,4-dihydroxybenzoate biosynthesis; 3,4-dihydroxybenzoate from 3-dehydroquinate: step 1/2. Is involved in the catabolism of quinate. Allows the utilization of quinate as carbon source via the beta-ketoadipate pathway. In Neosartorya fischeri (strain ATCC 1020 / DSM 3700 / CBS 544.65 / FGSC A1164 / JCM 1740 / NRRL 181 / WB 181) (Aspergillus fischerianus), this protein is Catabolic 3-dehydroquinase 2.